Reading from the N-terminus, the 120-residue chain is Ribonuclease P protein component (120 aa).

The protein belongs to the RnpA family. Consists of a catalytic RNA component (M1 or rnpB) and a protein subunit.

It carries out the reaction Endonucleolytic cleavage of RNA, removing 5'-extranucleotides from tRNA precursor.. Its function is as follows. RNaseP catalyzes the removal of the 5'-leader sequence from pre-tRNA to produce the mature 5'-terminus. It can also cleave other RNA substrates such as 4.5S RNA. The protein component plays an auxiliary but essential role in vivo by binding to the 5'-leader sequence and broadening the substrate specificity of the ribozyme. The polypeptide is Ribonuclease P protein component (Chlamydia trachomatis serovar L2 (strain ATCC VR-902B / DSM 19102 / 434/Bu)).